Here is a 512-residue protein sequence, read N- to C-terminus: MSYQYPSGFPGYPGYPGGDPSYPPAAQQAFPGGQFPPAAGGGAFPPASGGGNAPPPGGGYPHAGGYPAPGGYPGGMPSYPGAPGFGAPAGGQGYGAPPGAPAYGVPGYGGPGFNAPAGGYGAPNAGGFGVPPAGGYGSPGGAPGYGGFSQPSSQSYGAGGPGQMPGQMPGQMPGQAPSGYPSGPAPAQPTPYAAAMTATQGTIKAAPNFDALSDAEKLRKAMKGFGTDEKPIDVVANRSNDQRQKIQAAFKTAYGKDLIKDLKSELSGNVEELIIALFMPSTYYDAWSLYNAMKGAGTQERVLIEILCTRTNSEIRNIVACYKQEFGREIEKDIRSDTSGHFERLLISIMARGIVDESQNVNMQQAEQDAQRLYQAGEGKLGTDESSFNLVLASRSFPQLKAVAEAYARISKRDLLSVIGREFSGYIEDGLKAVLQCAINRPLFFRDRLCRSMKGAGTDDSTLIRIIVTRSEIDLVQIKQAYVQMYQKSLSAAISSDTSGAYKRMLLAISGH.

Low complexity predominate over residues 14 to 38 (GYPGGDPSYPPAAQQAFPGGQFPPA). 2 disordered regions span residues 14–62 (GYPG…GYPH) and 146–190 (GGFS…AQPT). Residues 39–52 (AGGGAFPPASGGGN) are compositionally biased toward gly residues. Positions 164-182 (MPGQMPGQMPGQAPSGYPS) are enriched in low complexity. 4 Annexin repeats span residues 209–279 (FDAL…ALFM), 280–351 (PSTY…SIMA), 364–436 (QQAE…AVLQ), and 440–511 (NRPL…AISG).

This sequence belongs to the annexin family.

Its function is as follows. Calcium/phospholipid-binding protein which promotes membrane fusion and is involved in exocytosis. The protein is Annexin A7 (anxa7) of Xenopus laevis (African clawed frog).